Consider the following 86-residue polypeptide: Omega-theraphotoxin-Hhn1d (86 aa).

Positions methionine 1–alanine 21 are cleaved as a signal peptide. Positions serine 22–arginine 50 are excised as a propeptide. Cystine bridges form between cysteine 52-cysteine 66, cysteine 59-cysteine 71, and cysteine 65-cysteine 78.

It belongs to the neurotoxin 10 (Hwtx-1) family. 17 (Hntx-9) subfamily. Expressed by the venom gland.

Its subcellular location is the secreted. Ion channel inhibitor. The protein is Omega-theraphotoxin-Hhn1d of Cyriopagopus hainanus (Chinese bird spider).